The sequence spans 139 residues: Small ribosomal subunit protein bS16 (139 aa).

Residues 84–139 are disordered; sequence KGEPAPAPLLQPAEKAARPSFEAIGGEDEGKGEAITQKKKADKKDEAAAESSASEA.

This sequence belongs to the bacterial ribosomal protein bS16 family.

The chain is Small ribosomal subunit protein bS16 from Streptomyces coelicolor (strain ATCC BAA-471 / A3(2) / M145).